A 152-amino-acid chain; its full sequence is Large ribosomal subunit protein bL9 (152 aa).

It belongs to the bacterial ribosomal protein bL9 family.

In terms of biological role, binds to the 23S rRNA. This chain is Large ribosomal subunit protein bL9, found in Coxiella burnetii (strain Dugway 5J108-111).